Here is a 352-residue protein sequence, read N- to C-terminus: MEKDILIELKNVSKKYGENYVIKNLNLFVRRNEFLTFLGPSGCGKTTTLNMIAGFETPDEGNIIFEDSSINIVPPHKRQINTVFQKYALFSHMNVYENVAFGLRIKKLPEKQIREEVEKMLSLVDLKGFEKRSTDSLSGGQQQRVAIARALVNKPKLLLLDEPLGALDLKLRKEMQLELKNIQQKLGITFIFVTHDQEEALTMSDTIVVLNKGTVQQIGTPEDIYNEPKNKFVANFIGVSNILNGVMLHDYKVKFDDETFDCVDTGFNENEDVDVVVRPEDIKIVSKENGKLFGKVISAVFRGVHYEIKVEVKNTTWIIHNTKHVRVGDSIGLDILPDDIHIMRKEKIDEEA.

An ABC transporter domain is found at I7 to I237. An ATP-binding site is contributed by G39–T46.

It belongs to the ABC transporter superfamily. Spermidine/putrescine importer (TC 3.A.1.11.1) family. The complex is composed of two ATP-binding proteins (PotA), two transmembrane proteins (PotB and PotC) and a solute-binding protein (PotD).

The protein localises to the cell membrane. The catalysed reaction is ATP + H2O + polyamine-[polyamine-binding protein]Side 1 = ADP + phosphate + polyamineSide 2 + [polyamine-binding protein]Side 1.. Part of the ABC transporter complex PotABCD involved in spermidine/putrescine import. Responsible for energy coupling to the transport system. The sequence is that of Spermidine/putrescine import ATP-binding protein PotA from Clostridium acetobutylicum (strain ATCC 824 / DSM 792 / JCM 1419 / IAM 19013 / LMG 5710 / NBRC 13948 / NRRL B-527 / VKM B-1787 / 2291 / W).